Consider the following 152-residue polypeptide: NADH-ubiquinone oxidoreductase chain 4 (152 aa).

Helical transmembrane passes span 2 to 22, 43 to 63, 84 to 104, and 128 to 148; these read FSGATTLMIAHGLTSSMYFCL, ILLPLTAFWWLTASLTNLALP, ITIVLTGLNMLITALYSLHMF, and MLMFMHLAPIILLSLNPNIIL.

It belongs to the complex I subunit 4 family.

The protein resides in the mitochondrion membrane. The enzyme catalyses a ubiquinone + NADH + 5 H(+)(in) = a ubiquinol + NAD(+) + 4 H(+)(out). Its function is as follows. Core subunit of the mitochondrial membrane respiratory chain NADH dehydrogenase (Complex I) that is believed to belong to the minimal assembly required for catalysis. Complex I functions in the transfer of electrons from NADH to the respiratory chain. The immediate electron acceptor for the enzyme is believed to be ubiquinone. The polypeptide is NADH-ubiquinone oxidoreductase chain 4 (MT-ND4) (Macaca fascicularis (Crab-eating macaque)).